A 150-amino-acid chain; its full sequence is MSRRDDTKADPIYRNRLVNMLVNRILKHGKKSLAYRILYNAMMNIRRETKYNPLFILRQAIRQVTPNVTIETRRVGGSTYRVPTEIESTQGKALAIRWLLEASRKRPGRNIASKSSSELMDAAENSGNAIRKREETHRMAEANRAFAHLR.

Belongs to the universal ribosomal protein uS7 family. In terms of assembly, part of the 30S ribosomal subunit.

The protein localises to the plastid. Its subcellular location is the chloroplast. In terms of biological role, one of the primary rRNA binding proteins, it binds directly to 16S rRNA where it nucleates assembly of the head domain of the 30S subunit. The polypeptide is Small ribosomal subunit protein uS7c (rps7) (Huperzia lucidula (Shining clubmoss)).